The primary structure comprises 68 residues: uncharacterized protein (68 aa).

The interval 1 to 27 (MNEFEKWIEGRYEPHEQKQKEHEDTMG) is disordered.

This is an uncharacterized protein from Bacillus subtilis (strain 168).